We begin with the raw amino-acid sequence, 161 residues long: MPSFDVISKVSYPEFDNALANCLREIGNRFDFKGLHISIERKDKIITTLAPDELKLKQVNELLQVHLIRRKVDPRVLSIKNSENAAGSSIRQVSELQEGISQENAKKIITEIKKLKLKIQIKIQGEELRAEGKKRDDLQEAMSAITAIDIGLPVEFVNFRD.

It belongs to the YajQ family.

Functionally, nucleotide-binding protein. In Pelagibacter ubique (strain HTCC1062), this protein is Nucleotide-binding protein SAR11_0692.